Here is a 193-residue protein sequence, read N- to C-terminus: Orotate phosphoribosyltransferase (193 aa).

Residues Arg85, Lys89, and 111–119 each bind 5-phospho-alpha-D-ribose 1-diphosphate; that span reads DDVLTTGKS. Positions 115 and 143 each coordinate orotate.

This sequence belongs to the purine/pyrimidine phosphoribosyltransferase family. PyrE subfamily. In terms of assembly, homodimer. Mg(2+) serves as cofactor.

It catalyses the reaction orotidine 5'-phosphate + diphosphate = orotate + 5-phospho-alpha-D-ribose 1-diphosphate. The protein operates within pyrimidine metabolism; UMP biosynthesis via de novo pathway; UMP from orotate: step 1/2. Functionally, catalyzes the transfer of a ribosyl phosphate group from 5-phosphoribose 1-diphosphate to orotate, leading to the formation of orotidine monophosphate (OMP). This is Orotate phosphoribosyltransferase from Pyrobaculum aerophilum (strain ATCC 51768 / DSM 7523 / JCM 9630 / CIP 104966 / NBRC 100827 / IM2).